Consider the following 516-residue polypeptide: BAR/IMD domain-containing adapter protein 2-like 1 (516 aa).

Residues 1-249 (MSRGPEEVNR…MNMIEEIKTP (249 aa)) form the IMD domain. A coiled-coil region spans residues 115 to 148 (MNATLKRYQAEHRNKLDSLEKSQAELKKIRRKSQ). Phosphothreonine is present on residues Thr-248 and Thr-257. A phosphoserine mark is found at Ser-261 and Ser-281. The segment at 303 to 328 (NPATAGQSAEKTNNSTANTGDDPSLQ) is disordered. Phosphoserine is present on Ser-332. Residues 340-403 (MKKQKVKTIF…PSSYTKLLEE (64 aa)) form the SH3 domain. Position 413 is a phosphothreonine (Thr-413). Ser-415, Ser-421, and Ser-423 each carry phosphoserine. A disordered region spans residues 454–516 (ADAAKIPSTS…TNDRSAPIIR (63 aa)). The span at 474–485 (ATSTSPSDSNGT) shows a compositional bias: polar residues. The segment at 488–516 (PPFLSGENPFATVKLRPTVTNDRSAPIIR) is binds F-actin.

As to quaternary structure, interacts with RAC1. Binds to F-actin. Interacts with FASLG. In terms of processing, phosphorylated on tyrosine in response to insulin.

The protein resides in the cytoplasm. Its subcellular location is the cytoskeleton. Functionally, may function as adapter protein. Involved in the formation of clusters of actin bundles. Plays a role in the reorganization of the actin cytoskeleton in response to bacterial infection. The protein is BAR/IMD domain-containing adapter protein 2-like 1 (Baiap2l1) of Rattus norvegicus (Rat).